Here is a 224-residue protein sequence, read N- to C-terminus: Cardosin-E (224 aa).

The region spanning 1–221 is the Peptidase A1 domain; the sequence is DSGSAIVALT…DYGNLLVGFA (221 aa). Residue D35 is part of the active site. A disulfide bridge links C125 with C129. D134 is a catalytic residue.

This sequence belongs to the peptidase A1 family. Heterodimer of a light chain and a heavy chain. An intermediate form is produced first, and undergoes proteolytic processing to remove the internal plant-specific insert (PSI) and the propeptide. In terms of processing, N-glycosylated. In terms of tissue distribution, pistils.

It localises to the microsome membrane. Its subcellular location is the protein storage vacuole. It is found in the secreted. The protein localises to the cell wall. The protein resides in the extracellular space. It localises to the extracellular matrix. Inhibited by pepstatin. Functionally, aspartic protease with a high preference for bonds between hydrophobic residues. In Cynara cardunculus (Cardoon), this protein is Cardosin-E.